A 131-amino-acid polypeptide reads, in one-letter code: Peptide methionine sulfoxide reductase MsrB (131 aa).

The 123-residue stretch at 8-130 folds into the MsrB domain; sequence LEEWRAMLDP…NSVCLDLVPR (123 aa). Zn(2+)-binding residues include cysteine 47, cysteine 50, cysteine 96, and cysteine 99. Catalysis depends on cysteine 119, which acts as the Nucleophile.

It belongs to the MsrB Met sulfoxide reductase family. Requires Zn(2+) as cofactor.

The catalysed reaction is L-methionyl-[protein] + [thioredoxin]-disulfide + H2O = L-methionyl-(R)-S-oxide-[protein] + [thioredoxin]-dithiol. The polypeptide is Peptide methionine sulfoxide reductase MsrB (Pseudomonas fluorescens (strain Pf0-1)).